The chain runs to 227 residues: MENSDTDSEVFFWFQNQNQNHSHKFPSSCFPPSSHSAFYGSSSMINTETATMDEEDVCESYMMREITKKRKLTPIQLRLLEESFEEEKRLEPDRKLWLAEKLGLQPSQVAVWFQNRRARYKTKQLEHDCDSLKASYAKLKTDWDILFVQNQTLKSKVDLLKEKLKMQENLETQSIERKRLGEEGSSVKSDNTQYSEEEGLENQYSFPELAVLGFYYDPTLTASNLRL.

Residues 65–124 (EITKKRKLTPIQLRLLEESFEEEKRLEPDRKLWLAEKLGLQPSQVAVWFQNRRARYKTKQ) constitute a DNA-binding region (homeobox). The leucine-zipper stretch occupies residues 125–153 (LEHDCDSLKASYAKLKTDWDILFVQNQTL). Residues 175 to 198 (IERKRLGEEGSSVKSDNTQYSEEE) are disordered.

It belongs to the HD-ZIP homeobox family. Class I subfamily. Predominantly expressed in flowers and siliques.

The protein resides in the nucleus. Probable transcription factor. The chain is Homeobox-leucine zipper protein ATHB-54 (ATHB-54) from Arabidopsis thaliana (Mouse-ear cress).